Consider the following 318-residue polypeptide: MTTMNLLLLIMSTLAAMAFLTLVERKLLGYMQLRKGPNIVGPYGLLQPFADAMKLFTKEPLKPSTSSTILYITAPALAFSIALLLWTPLPMPNPLINFNLGLLFILATSSLTVYSILWSGWASNSNYALIGALRAVAQMISYEVTLSIILLSILLTSGSFNLNMLITTQEHLWLILPSWPLAMMWFTSTLAETNRTPFDLMEGESELVSGFNIEYSAGPFALFFMAEYMNIIMMNALTTTIFLGTFYPTHSPELFTTSFTIKTLLLTSLFLWIRAAYPRFRYDQLMHLLWKSFLPLTLALLMWSTSMPIAISSIPPQT.

8 consecutive transmembrane segments (helical) span residues 3–23, 69–89, 98–118, 135–155, 171–191, 217–237, 253–273, and 294–314; these read TMNL…LTLV, ILYI…WTPL, FNLG…SILW, AVAQ…SILL, HLWL…STLA, AGPF…MNAL, ELFT…FLWI, and LPLT…ISSI.

This sequence belongs to the complex I subunit 1 family. Core subunit of respiratory chain NADH dehydrogenase (Complex I) which is composed of 45 different subunits.

It localises to the mitochondrion inner membrane. The catalysed reaction is a ubiquinone + NADH + 5 H(+)(in) = a ubiquinol + NAD(+) + 4 H(+)(out). Core subunit of the mitochondrial membrane respiratory chain NADH dehydrogenase (Complex I) which catalyzes electron transfer from NADH through the respiratory chain, using ubiquinone as an electron acceptor. Essential for the catalytic activity and assembly of complex I. The sequence is that of NADH-ubiquinone oxidoreductase chain 1 (MT-ND1) from Papio hamadryas (Hamadryas baboon).